We begin with the raw amino-acid sequence, 1432 residues long: Gag-Pol polyprotein (1432 aa).

Residue G2 is the site of N-myristoyl glycine; by host attachment. Residues 7 to 31 are interaction with Gp41; the sequence is ILSGGKLDDWEKIRLRPGGKKQYRI. The interval 8–43 is interaction with host CALM1; the sequence is LSGGKLDDWEKIRLRPGGKKQYRIKHLVWASRELDR. The interaction with host AP3D1 stretch occupies residues 12–19; that stretch reads KLDDWEKI. Residues 14–33 form an interaction with membrane phosphatidylinositol 4,5-bisphosphate and RNA region; it reads DDWEKIRLRPGGKKQYRIKH. The Nuclear export signal motif lies at 16-22; it reads WEKIRLR. The Nuclear localization signal motif lies at 26-32; the sequence is KKQYRIK. The interval 73–77 is interaction with membrane phosphatidylinositol 4,5-bisphosphate; sequence EEIKS. Y132 carries the post-translational modification Phosphotyrosine; by host. Residues 189–227 are interaction with human PPIA/CYPA and NUP153; that stretch reads NTIGGHQAAMQMLKDTINEEAAEWDRVHPVHAGPVAPGQ. The interval 277–363 is dimerization/Multimerization of capsid protein p24; sequence YSPVSILDIR…GGPGHKARVL (87 aa). 2 consecutive CCHC-type zinc fingers follow at residues 389 to 406 and 410 to 427; these read VKCFNCGKQGHIAKNCRA and KGCWKCGKEGHQMKDCTE. The interval 443-482 is disordered; sequence EAREFSPEQTRANSPTSREPRVRRGDPLPETGAEGQGTVS. Residues 449-459 show a composition bias toward polar residues; sequence PEQTRANSPTS. A compositionally biased stretch (basic and acidic residues) spans 460 to 469; the sequence is REPRVRRGDP. The tract at residues 486-490 is dimerization of protease; sequence PQITL. Positions 505–574 constitute a Peptidase A2 domain; the sequence is REALLDTGAD…TPVNIIGRNM (70 aa). D510 acts as the For protease activity; shared with dimeric partner in catalysis. 2 dimerization of protease regions span residues 534 to 540 and 573 to 585; these read GIGGFIK and NMLTQLGCTLNFP. The Reverse transcriptase domain occupies 628–818; sequence EGKISRIGPE…PPFLWMGYEL (191 aa). Residues D694, D769, and D770 each contribute to the Mg(2+) site. The RT 'primer grip' stretch occupies residues 811-819; it reads FLWMGYELH. The Tryptophan repeat motif motif lies at 982 to 998; it reads WETWWTDYWQATWIPEW. Residues 1018–1141 form the RNase H type-1 domain; it reads IMGAETFYVD…VDKLVSSGIR (124 aa). Residues D1027, E1062, D1082, and D1133 each contribute to the Mg(2+) site. The Integrase-type zinc-finger motif lies at 1147–1188; that stretch reads DGIDKAQEEHEKYHSNWRAMASDFNLPPVVAKEIVASCDKCQ. Residues H1156, H1160, C1184, and C1187 each contribute to the Zn(2+) site. An Integrase catalytic domain is found at 1198-1348; the sequence is VDCSPGIWQL…SAGERIIDII (151 aa). Positions 1208, 1260, and 1296 each coordinate Mg(2+). The segment at residues 1367–1414 is a DNA-binding region (integrase-type); the sequence is FRVYYRDSRDPIWKGPAKLLWKGEGAVVIQDNSEIKVVPRRKAKIIRD.

In terms of assembly, homotrimer; further assembles as hexamers of trimers. Interacts with gp41 (via C-terminus). Interacts with host CALM1; this interaction induces a conformational change in the Matrix protein, triggering exposure of the myristate group. Interacts with host AP3D1; this interaction allows the polyprotein trafficking to multivesicular bodies during virus assembly. Part of the pre-integration complex (PIC) which is composed of viral genome, matrix protein, Vpr and integrase. As to quaternary structure, homodimer; the homodimer further multimerizes as homohexamers or homopentamers. Interacts with human PPIA/CYPA; This interaction stabilizes the capsid. Interacts with human NUP153. Interacts with host PDZD8; this interaction stabilizes the capsid. Interacts with monkey TRIM5; this interaction destabilizes the capsid. Homodimer, whose active site consists of two apposed aspartic acid residues. In terms of assembly, heterodimer of p66 RT and p51 RT (RT p66/p51). Heterodimerization of RT is essential for DNA polymerase activity. The overall folding of the subdomains is similar in p66 RT and p51 RT but the spatial arrangements of the subdomains are dramatically different. As to quaternary structure, homotetramer; may further associate as a homohexadecamer. Part of the pre-integration complex (PIC) which is composed of viral genome, matrix protein, Vpr and integrase. Interacts with human SMARCB1/INI1 and human PSIP1/LEDGF isoform 1. Interacts with human KPNA3; this interaction might play a role in nuclear import of the pre-integration complex. Interacts with human NUP153; this interaction might play a role in nuclear import of the pre-integration complex. Requires Mg(2+) as cofactor. Post-translationally, specific enzymatic cleavages by the viral protease yield mature proteins. The protease is released by autocatalytic cleavage. The polyprotein is cleaved during and after budding, this process is termed maturation. Proteolytic cleavage of p66 RT removes the RNase H domain to yield the p51 RT subunit. Nucleocapsid protein p7 might be further cleaved after virus entry. Tyrosine phosphorylated presumably in the virion by a host kinase. Phosphorylation is apparently not a major regulator of membrane association. In terms of processing, phosphorylated possibly by host MAPK1; this phosphorylation is necessary for Pin1-mediated virion uncoating. Post-translationally, methylated by host PRMT6, impairing its function by reducing RNA annealing and the initiation of reverse transcription.

The protein resides in the host cell membrane. It is found in the host endosome. The protein localises to the host multivesicular body. Its subcellular location is the virion membrane. It localises to the host nucleus. The protein resides in the host cytoplasm. It is found in the virion. It carries out the reaction Specific for a P1 residue that is hydrophobic, and P1' variable, but often Pro.. It catalyses the reaction Endohydrolysis of RNA in RNA/DNA hybrids. Three different cleavage modes: 1. sequence-specific internal cleavage of RNA. Human immunodeficiency virus type 1 and Moloney murine leukemia virus enzymes prefer to cleave the RNA strand one nucleotide away from the RNA-DNA junction. 2. RNA 5'-end directed cleavage 13-19 nucleotides from the RNA end. 3. DNA 3'-end directed cleavage 15-20 nucleotides away from the primer terminus.. The catalysed reaction is 3'-end directed exonucleolytic cleavage of viral RNA-DNA hybrid.. The enzyme catalyses DNA(n) + a 2'-deoxyribonucleoside 5'-triphosphate = DNA(n+1) + diphosphate. With respect to regulation, protease: The viral protease is inhibited by many synthetic protease inhibitors (PIs), such as amprenavir, atazanavir, indinavir, loprinavir, nelfinavir, ritonavir and saquinavir. Use of protease inhibitors in tritherapy regimens permit more ambitious therapeutic strategies. Reverse transcriptase/ribonuclease H: RT can be inhibited either by nucleoside RT inhibitors (NRTIs) or by non nucleoside RT inhibitors (NNRTIs). NRTIs act as chain terminators, whereas NNRTIs inhibit DNA polymerization by binding a small hydrophobic pocket near the RT active site and inducing an allosteric change in this region. Classical NRTIs are abacavir, adefovir (PMEA), didanosine (ddI), lamivudine (3TC), stavudine (d4T), tenofovir (PMPA), zalcitabine (ddC), and zidovudine (AZT). Classical NNRTIs are atevirdine (BHAP U-87201E), delavirdine, efavirenz (DMP-266), emivirine (I-EBU), and nevirapine (BI-RG-587). The tritherapies used as a basic effective treatment of AIDS associate two NRTIs and one NNRTI. Mediates, with Gag polyprotein, the essential events in virion assembly, including binding the plasma membrane, making the protein-protein interactions necessary to create spherical particles, recruiting the viral Env proteins, and packaging the genomic RNA via direct interactions with the RNA packaging sequence (Psi). Gag-Pol polyprotein may regulate its own translation, by the binding genomic RNA in the 5'-UTR. At low concentration, the polyprotein would promote translation, whereas at high concentration, the polyprotein would encapsidate genomic RNA and then shut off translation. Its function is as follows. Targets the polyprotein to the plasma membrane via a multipartite membrane-binding signal, that includes its myristoylated N-terminus. Matrix protein is part of the pre-integration complex. Implicated in the release from host cell mediated by Vpu. Binds to RNA. Functionally, forms the conical core that encapsulates the genomic RNA-nucleocapsid complex in the virion. Most core are conical, with only 7% tubular. The core is constituted by capsid protein hexamer subunits. The core is disassembled soon after virion entry. Host restriction factors such as TRIM5-alpha or TRIMCyp bind retroviral capsids and cause premature capsid disassembly, leading to blocks in reverse transcription. Capsid restriction by TRIM5 is one of the factors which restricts HIV-1 to the human species. Host PIN1 apparently facilitates the virion uncoating. On the other hand, interactions with PDZD8 or CYPA stabilize the capsid. In terms of biological role, encapsulates and protects viral dimeric unspliced genomic RNA (gRNA). Binds these RNAs through its zinc fingers. Acts as a nucleic acid chaperone which is involved in rearangement of nucleic acid secondary structure during gRNA retrotranscription. Also facilitates template switch leading to recombination. As part of the polyprotein, participates in gRNA dimerization, packaging, tRNA incorporation and virion assembly. Aspartyl protease that mediates proteolytic cleavages of Gag and Gag-Pol polyproteins during or shortly after the release of the virion from the plasma membrane. Cleavages take place as an ordered, step-wise cascade to yield mature proteins. This process is called maturation. Displays maximal activity during the budding process just prior to particle release from the cell. Also cleaves Nef and Vif, probably concomitantly with viral structural proteins on maturation of virus particles. Hydrolyzes host EIF4GI and PABP1 in order to shut off the capped cellular mRNA translation. The resulting inhibition of cellular protein synthesis serves to ensure maximal viral gene expression and to evade host immune response. Also mediates cleavage of host YTHDF3. Mediates cleavage of host CARD8, thereby activating the CARD8 inflammasome, leading to the clearance of latent HIV-1 in patient CD4(+) T-cells after viral reactivation; in contrast, HIV-1 can evade CARD8-sensing when its protease remains inactive in infected cells prior to viral budding. Its function is as follows. Multifunctional enzyme that converts the viral RNA genome into dsDNA in the cytoplasm, shortly after virus entry into the cell. This enzyme displays a DNA polymerase activity that can copy either DNA or RNA templates, and a ribonuclease H (RNase H) activity that cleaves the RNA strand of RNA-DNA heteroduplexes in a partially processive 3' to 5' endonucleasic mode. Conversion of viral genomic RNA into dsDNA requires many steps. A tRNA(3)-Lys binds to the primer-binding site (PBS) situated at the 5'-end of the viral RNA. RT uses the 3' end of the tRNA primer to perform a short round of RNA-dependent minus-strand DNA synthesis. The reading proceeds through the U5 region and ends after the repeated (R) region which is present at both ends of viral RNA. The portion of the RNA-DNA heteroduplex is digested by the RNase H, resulting in a ssDNA product attached to the tRNA primer. This ssDNA/tRNA hybridizes with the identical R region situated at the 3' end of viral RNA. This template exchange, known as minus-strand DNA strong stop transfer, can be either intra- or intermolecular. RT uses the 3' end of this newly synthesized short ssDNA to perform the RNA-dependent minus-strand DNA synthesis of the whole template. RNase H digests the RNA template except for two polypurine tracts (PPTs) situated at the 5'-end and near the center of the genome. It is not clear if both polymerase and RNase H activities are simultaneous. RNase H probably can proceed both in a polymerase-dependent (RNA cut into small fragments by the same RT performing DNA synthesis) and a polymerase-independent mode (cleavage of remaining RNA fragments by free RTs). Secondly, RT performs DNA-directed plus-strand DNA synthesis using the PPTs that have not been removed by RNase H as primers. PPTs and tRNA primers are then removed by RNase H. The 3' and 5' ssDNA PBS regions hybridize to form a circular dsDNA intermediate. Strand displacement synthesis by RT to the PBS and PPT ends produces a blunt ended, linear dsDNA copy of the viral genome that includes long terminal repeats (LTRs) at both ends. Functionally, catalyzes viral DNA integration into the host chromosome, by performing a series of DNA cutting and joining reactions. This enzyme activity takes place after virion entry into a cell and reverse transcription of the RNA genome in dsDNA. The first step in the integration process is 3' processing. This step requires a complex comprising the viral genome, matrix protein, Vpr and integrase. This complex is called the pre-integration complex (PIC). The integrase protein removes 2 nucleotides from each 3' end of the viral DNA, leaving recessed CA OH's at the 3' ends. In the second step, the PIC enters cell nucleus. This process is mediated through integrase and Vpr proteins, and allows the virus to infect a non dividing cell. This ability to enter the nucleus is specific of lentiviruses, other retroviruses cannot and rely on cell division to access cell chromosomes. In the third step, termed strand transfer, the integrase protein joins the previously processed 3' ends to the 5' ends of strands of target cellular DNA at the site of integration. The 5'-ends are produced by integrase-catalyzed staggered cuts, 5 bp apart. A Y-shaped, gapped, recombination intermediate results, with the 5'-ends of the viral DNA strands and the 3' ends of target DNA strands remaining unjoined, flanking a gap of 5 bp. The last step is viral DNA integration into host chromosome. This involves host DNA repair synthesis in which the 5 bp gaps between the unjoined strands are filled in and then ligated. Since this process occurs at both cuts flanking the HIV genome, a 5 bp duplication of host DNA is produced at the ends of HIV-1 integration. Alternatively, Integrase may catalyze the excision of viral DNA just after strand transfer, this is termed disintegration. The protein is Gag-Pol polyprotein (gag-pol) of Homo sapiens (Human).